A 610-amino-acid polypeptide reads, in one-letter code: DNA mismatch repair protein MutL (610 aa).

The protein belongs to the DNA mismatch repair MutL/HexB family.

Functionally, this protein is involved in the repair of mismatches in DNA. It is required for dam-dependent methyl-directed DNA mismatch repair. May act as a 'molecular matchmaker', a protein that promotes the formation of a stable complex between two or more DNA-binding proteins in an ATP-dependent manner without itself being part of a final effector complex. The polypeptide is DNA mismatch repair protein MutL (Rickettsia canadensis (strain McKiel)).